We begin with the raw amino-acid sequence, 63 residues long: Large ribosomal subunit protein bL28 (63 aa).

It belongs to the bacterial ribosomal protein bL28 family.

This Clostridium acetobutylicum (strain ATCC 824 / DSM 792 / JCM 1419 / IAM 19013 / LMG 5710 / NBRC 13948 / NRRL B-527 / VKM B-1787 / 2291 / W) protein is Large ribosomal subunit protein bL28.